Reading from the N-terminus, the 1378-residue chain is DNA-directed RNA polymerase subunit beta' (1378 aa).

4 residues coordinate Zn(2+): Cys-69, Cys-71, Cys-84, and Cys-87. Residues Asp-460, Asp-462, and Asp-464 each coordinate Mg(2+). 4 residues coordinate Zn(2+): Cys-808, Cys-882, Cys-889, and Cys-892.

It belongs to the RNA polymerase beta' chain family. As to quaternary structure, the RNAP catalytic core consists of 2 alpha, 1 beta, 1 beta' and 1 omega subunit. When a sigma factor is associated with the core the holoenzyme is formed, which can initiate transcription. The cofactor is Mg(2+). Zn(2+) serves as cofactor.

It carries out the reaction RNA(n) + a ribonucleoside 5'-triphosphate = RNA(n+1) + diphosphate. In terms of biological role, DNA-dependent RNA polymerase catalyzes the transcription of DNA into RNA using the four ribonucleoside triphosphates as substrates. The polypeptide is DNA-directed RNA polymerase subunit beta' (Rickettsia canadensis (strain McKiel)).